The following is a 1624-amino-acid chain: Putative serine/threonine-protein kinase/receptor R831 (1624 aa).

The N-terminal stretch at Met-1–Thr-25 is a signal peptide. N-linked (GlcNAc...) asparagine; by host glycans are attached at residues Asn-152, Asn-169, Asn-200, Asn-205, Asn-225, Asn-240, Asn-245, Asn-292, Asn-364, Asn-479, Asn-541, Asn-720, and Asn-737. The helical transmembrane segment at Val-747 to Phe-767 threads the bilayer. The Protein kinase 1 domain occupies Leu-786–Leu-1049. ATP is bound by residues Leu-792–Val-800 and Lys-813. Asp-908 acts as the Proton acceptor in catalysis. A compositionally biased stretch (low complexity) spans Asn-1054–Thr-1093. Residues Asn-1054–Asn-1101 are disordered. In terms of domain architecture, Guanylate cyclase spans Thr-1109–Thr-1252. The Protein kinase 2 domain maps to Ile-1364 to Leu-1615. ATP contacts are provided by residues Ile-1370 to Val-1378 and Lys-1391. The Proton acceptor role is filled by Asp-1487.

The protein resides in the membrane. It carries out the reaction L-seryl-[protein] + ATP = O-phospho-L-seryl-[protein] + ADP + H(+). The catalysed reaction is L-threonyl-[protein] + ATP = O-phospho-L-threonyl-[protein] + ADP + H(+). In Acanthamoeba polyphaga (Amoeba), this protein is Putative serine/threonine-protein kinase/receptor R831.